Reading from the N-terminus, the 217-residue chain is FMN-dependent NADH:quinone oxidoreductase (217 aa).

Residues Ser-10, 17 to 19, and 137 to 140 each bind FMN; these read SAS and SRGG.

The protein belongs to the azoreductase type 1 family. Homodimer. Requires FMN as cofactor.

It carries out the reaction 2 a quinone + NADH + H(+) = 2 a 1,4-benzosemiquinone + NAD(+). The enzyme catalyses N,N-dimethyl-1,4-phenylenediamine + anthranilate + 2 NAD(+) = 2-(4-dimethylaminophenyl)diazenylbenzoate + 2 NADH + 2 H(+). Functionally, quinone reductase that provides resistance to thiol-specific stress caused by electrophilic quinones. Also exhibits azoreductase activity. Catalyzes the reductive cleavage of the azo bond in aromatic azo compounds to the corresponding amines. This chain is FMN-dependent NADH:quinone oxidoreductase, found in Streptomyces avermitilis (strain ATCC 31267 / DSM 46492 / JCM 5070 / NBRC 14893 / NCIMB 12804 / NRRL 8165 / MA-4680).